We begin with the raw amino-acid sequence, 265 residues long: Capsule polysaccharide export inner-membrane protein BexB (265 aa).

6 helical membrane passes run 37–57, 64–84, 121–141, 148–168, 178–198, and 235–255; these read IGFLWLFVEPLLMTFFIVMMW, KFSTLNMIAFVMTGYPMAMMW, VAGASIAQILFMAVLVLIGWI, FYMLMAWFLMAMFAFALGLII, FGKIWGTLSFVLLPISGAFFF, and ESIGFLVVSDLALLLMGLVMV. Positions 37–258 constitute an ABC transmembrane type-2 domain; sequence IGFLWLFVEP…LMGLVMVKNF (222 aa).

This sequence belongs to the ABC-2 integral membrane protein family.

It localises to the cell inner membrane. Its function is as follows. May form an ATP-driven capsule polysaccharide export apparatus, in association with the BexA, BexC and BexD proteins. The sequence is that of Capsule polysaccharide export inner-membrane protein BexB (bexB) from Haemophilus influenzae.